The primary structure comprises 510 residues: tRNA-2-methylthio-N(6)-dimethylallyladenosine synthase (510 aa).

The disordered stretch occupies residues 1 to 25; that stretch reads MSGFNDSPVPESAEKADGLLSQERG. Residues 34-154 form the MTTase N-terminal domain; the sequence is RKLFVKSYGC…LPDLLRRVAH (121 aa). [4Fe-4S] cluster-binding residues include Cys43, Cys79, Cys117, Cys195, Cys199, and Cys202. Residues 181 to 414 enclose the Radical SAM core domain; sequence AERGVGAFVT…QALLEEQRQA (234 aa). The 63-residue stretch at 417–479 folds into the TRAM domain; it reads KAMIGRVLPV…PNSFHGRLLA (63 aa). Polar residues predominate over residues 484 to 493; it reads QESAQGQESA. Positions 484–510 are disordered; that stretch reads QESAQGQESAQGMERMEQNARAWEVPV.

Belongs to the methylthiotransferase family. MiaB subfamily. As to quaternary structure, monomer. [4Fe-4S] cluster is required as a cofactor.

It is found in the cytoplasm. The enzyme catalyses N(6)-dimethylallyladenosine(37) in tRNA + (sulfur carrier)-SH + AH2 + 2 S-adenosyl-L-methionine = 2-methylsulfanyl-N(6)-dimethylallyladenosine(37) in tRNA + (sulfur carrier)-H + 5'-deoxyadenosine + L-methionine + A + S-adenosyl-L-homocysteine + 2 H(+). Functionally, catalyzes the methylthiolation of N6-(dimethylallyl)adenosine (i(6)A), leading to the formation of 2-methylthio-N6-(dimethylallyl)adenosine (ms(2)i(6)A) at position 37 in tRNAs that read codons beginning with uridine. This is tRNA-2-methylthio-N(6)-dimethylallyladenosine synthase from Beijerinckia indica subsp. indica (strain ATCC 9039 / DSM 1715 / NCIMB 8712).